The chain runs to 301 residues: Phosphatidylglycerol--prolipoprotein diacylglyceryl transferase (301 aa).

The next 4 helical transmembrane spans lie at 10–30, 57–77, 92–112, and 119–139; these read IAFS…LAGF, LLFY…MLFY, VWEG…AVAW, and MHMF…LGFG. An a 1,2-diacyl-sn-glycero-3-phospho-(1'-sn-glycerol)-binding site is contributed by Arg-140. The next 3 membrane-spanning stretches (helical) occupy residues 202–222, 230–250, and 264–284; these read PSQL…LWLF, YAVS…VEFV, and LTRG…LFWL.

The protein belongs to the Lgt family.

The protein resides in the cell inner membrane. It catalyses the reaction L-cysteinyl-[prolipoprotein] + a 1,2-diacyl-sn-glycero-3-phospho-(1'-sn-glycerol) = an S-1,2-diacyl-sn-glyceryl-L-cysteinyl-[prolipoprotein] + sn-glycerol 1-phosphate + H(+). It functions in the pathway protein modification; lipoprotein biosynthesis (diacylglyceryl transfer). Its function is as follows. Catalyzes the transfer of the diacylglyceryl group from phosphatidylglycerol to the sulfhydryl group of the N-terminal cysteine of a prolipoprotein, the first step in the formation of mature lipoproteins. This is Phosphatidylglycerol--prolipoprotein diacylglyceryl transferase from Xylella fastidiosa (strain M23).